We begin with the raw amino-acid sequence, 873 residues long: Leucine--tRNA ligase (873 aa).

The short motif at 42-52 (PYPSGKLHMGH) is the 'HIGH' region element. Positions 628–632 (KMSKS) match the 'KMSKS' region motif. Lys631 contacts ATP.

This sequence belongs to the class-I aminoacyl-tRNA synthetase family.

The protein resides in the cytoplasm. It catalyses the reaction tRNA(Leu) + L-leucine + ATP = L-leucyl-tRNA(Leu) + AMP + diphosphate. This chain is Leucine--tRNA ligase, found in Azoarcus sp. (strain BH72).